The chain runs to 374 residues: Probable neutral protease 2 homolog TRV_05367 (374 aa).

The signal sequence occupies residues 1–19; sequence MQVIVALAALGSLAAPALG. Positions 20 to 189 are excised as a propeptide; that stretch reads FSIPRGVPVS…RGPLTRINKR (170 aa). Cystine bridges form between Cys197/Cys267 and Cys274/Cys292. His317 serves as a coordination point for Zn(2+). Glu318 is an active-site residue. Zn(2+)-binding residues include His321 and Asp332.

This sequence belongs to the peptidase M35 family. Zn(2+) is required as a cofactor.

It localises to the secreted. It carries out the reaction Preferential cleavage of bonds with hydrophobic residues in P1'. Also 3-Asn-|-Gln-4 and 8-Gly-|-Ser-9 bonds in insulin B chain.. Probable secreted metalloprotease that shows high activities on basic nuclear substrates such as histone and protamine. May be involved in virulence. This chain is Probable neutral protease 2 homolog TRV_05367, found in Trichophyton verrucosum (strain HKI 0517).